A 1103-amino-acid polypeptide reads, in one-letter code: Bifunctional cytochrome P450/NADPH--P450 reductase (1103 aa).

Residues 1 to 491 (MSTPKAEPVP…SSSEHADHAA (491 aa)) form a cytochrome P450 region. Heme is bound at residue Cys-415. The tract at residues 492-1103 (GHGKAGAAKK…KERYTTDIFA (612 aa)) is NADPH--P450 reductase. The Flavodoxin-like domain occupies 508–649 (MHVYYGSNTG…DFDTWGETSF (142 aa)). Residues 514-519 (SNTGTC), 561-564 (SYEG), Cys-596, and Thr-604 each bind FMN. The FAD-binding FR-type domain occupies 685 to 924 (LQLQEGLVVE…RPSHTGFKPP (240 aa)).

This sequence in the N-terminal section; belongs to the cytochrome P450 family. The cofactor is heme. FAD serves as cofactor. It depends on FMN as a cofactor.

It catalyses the reaction 2 oxidized [cytochrome P450] + NADPH = 2 reduced [cytochrome P450] + NADP(+) + H(+). It carries out the reaction an organic molecule + reduced [NADPH--hemoprotein reductase] + O2 = an alcohol + oxidized [NADPH--hemoprotein reductase] + H2O + H(+). Its function is as follows. Functions as a fatty acid monooxygenase. Also displays a NADPH-dependent reductase activity in the C-terminal domain, which allows electron transfer from NADPH to the heme iron of the cytochrome P450 N-terminal domain. This chain is Bifunctional cytochrome P450/NADPH--P450 reductase, found in Aspergillus oryzae (strain ATCC 42149 / RIB 40) (Yellow koji mold).